Here is a 407-residue protein sequence, read N- to C-terminus: Tryptophan synthase beta chain (407 aa).

K98 carries the post-translational modification N6-(pyridoxal phosphate)lysine.

The protein belongs to the TrpB family. In terms of assembly, tetramer of two alpha and two beta chains. It depends on pyridoxal 5'-phosphate as a cofactor.

The catalysed reaction is (1S,2R)-1-C-(indol-3-yl)glycerol 3-phosphate + L-serine = D-glyceraldehyde 3-phosphate + L-tryptophan + H2O. The protein operates within amino-acid biosynthesis; L-tryptophan biosynthesis; L-tryptophan from chorismate: step 5/5. Its function is as follows. The beta subunit is responsible for the synthesis of L-tryptophan from indole and L-serine. This Bradyrhizobium sp. (strain ORS 278) protein is Tryptophan synthase beta chain.